The sequence spans 304 residues: Cytochrome c biogenesis protein CcsA (304 aa).

8 helical membrane-spanning segments follow: residues 11-31, 37-57, 63-83, 96-116, 141-161, 212-232, 246-263, and 275-295; these read SLGF…FWAV, AGLV…QLIL, GHFP…ACTL, IVAA…SFAL, VIMV…AVLV, TITV…VWAN, TWAL…HTRL, and VAVV…LLGI.

The protein belongs to the CcmF/CycK/Ccl1/NrfE/CcsA family. May interact with ccs1.

The protein localises to the cellular thylakoid membrane. Its function is as follows. Required during biogenesis of c-type cytochromes (cytochrome c6 and cytochrome f) at the step of heme attachment. The sequence is that of Cytochrome c biogenesis protein CcsA from Synechococcus sp. (strain CC9605).